The primary structure comprises 311 residues: N-acetylmuramic acid 6-phosphate etherase (311 aa).

One can recognise an SIS domain in the interval 66–229; that stretch reads VADRMARGGR…STITMIRLGK (164 aa). Residue Glu94 is the Proton donor of the active site. The active site involves Glu125.

This sequence belongs to the GCKR-like family. MurNAc-6-P etherase subfamily. As to quaternary structure, homodimer.

The enzyme catalyses N-acetyl-D-muramate 6-phosphate + H2O = N-acetyl-D-glucosamine 6-phosphate + (R)-lactate. The protein operates within amino-sugar metabolism; N-acetylmuramate degradation. Functionally, specifically catalyzes the cleavage of the D-lactyl ether substituent of MurNAc 6-phosphate, producing GlcNAc 6-phosphate and D-lactate. The polypeptide is N-acetylmuramic acid 6-phosphate etherase (Streptomyces avermitilis (strain ATCC 31267 / DSM 46492 / JCM 5070 / NBRC 14893 / NCIMB 12804 / NRRL 8165 / MA-4680)).